The chain runs to 1342 residues: DNA-directed RNA polymerase subunit beta (1342 aa).

The protein belongs to the RNA polymerase beta chain family. As to quaternary structure, the RNAP catalytic core consists of 2 alpha, 1 beta, 1 beta' and 1 omega subunit. When a sigma factor is associated with the core the holoenzyme is formed, which can initiate transcription.

The enzyme catalyses RNA(n) + a ribonucleoside 5'-triphosphate = RNA(n+1) + diphosphate. In terms of biological role, DNA-dependent RNA polymerase catalyzes the transcription of DNA into RNA using the four ribonucleoside triphosphates as substrates. The sequence is that of DNA-directed RNA polymerase subunit beta from Tolumonas auensis (strain DSM 9187 / NBRC 110442 / TA 4).